We begin with the raw amino-acid sequence, 161 residues long: Protein YzcX (161 aa).

The protein is Protein YzcX (yzcX) of Escherichia coli (strain K12).